The primary structure comprises 373 residues: Pectin lyase D (373 aa).

Residues Met1–Ala19 form the signal peptide. 2 disulfide bridges follow: Cys82/Cys101 and Cys91/Cys225. Asn128 carries an N-linked (GlcNAc...) asparagine glycan. Arg255 is an active-site residue. Asn274 carries N-linked (GlcNAc...) asparagine glycosylation. Cys321 and Cys329 are joined by a disulfide. Asn348 carries N-linked (GlcNAc...) asparagine glycosylation. Residues Leu354 to Ser366 show a composition bias toward low complexity. Residues Leu354 to Leu373 are disordered.

It belongs to the polysaccharide lyase 1 family. Post-translationally, may be O-glycosylated; does not contain N-acetylglucosamine.

It is found in the secreted. It catalyses the reaction Eliminative cleavage of (1-&gt;4)-alpha-D-galacturonan methyl ester to give oligosaccharides with 4-deoxy-6-O-methyl-alpha-D-galact-4-enuronosyl groups at their non-reducing ends.. Its function is as follows. Pectinolytic enzymes consist of four classes of enzymes: pectin lyase, polygalacturonase, pectin methylesterase and rhamnogalacturonase. Among pectinolytic enzymes, pectin lyase is the most important in depolymerization of pectin, since it cleaves internal glycosidic bonds of highly methylated pectins. The polypeptide is Pectin lyase D (pelD) (Aspergillus niger).